Here is a 596-residue protein sequence, read N- to C-terminus: MGKIQELSPELINQIAAGEVIESAHSVVKELMENSMDAGATQMDIESKDGGLSLLRITDNGSGIDPEDIEPALKRHATSKIRDYGDLENVLSYGFRGEALASIASVSRLTLESGIKNQKTAWKICSIGGKISEKEEIPGFVGTKILVEELFFNTPVRRKFLKSVRSEDKKIRDRVTTQALARHDVRFRLFQDGKEVFVLPSRENKKDRIVDLFGENFRDHLLEVSLERGGLNATGYISDPDFYKSNRTGQFVFVNGRPVEIKYGSTLLKKAYDELLPPNGHPYCFLFFEIDPSRVDVNVHPAKKEIRFLDEEGFNGFFLTLIQKELRSSTPVSFLELKKRLLRPTPETFKTSSLYQAHSSSRSGESPLLSRELFTEVPRQEGFDLDRMGPGASLSALTDNVVKHSSFVPKKHFGVLFETFILAEAEDGFCIIDQHTAHERIRYEEVLRKLEKKNYGIQPLLTPIRIDVSKQEQEDILNRKKEYEEVGIFLDPLGEDSVVLREIPAYMEPGEEKEIILDFLNRTEGKETTEPELYDLMAKCVACRSAIKKGDHLSDPILAEILNRLSYCENPSRCPHGRPTLVKLSRDDLERMFHRK.

Belongs to the DNA mismatch repair MutL/HexB family.

Functionally, this protein is involved in the repair of mismatches in DNA. It is required for dam-dependent methyl-directed DNA mismatch repair. May act as a 'molecular matchmaker', a protein that promotes the formation of a stable complex between two or more DNA-binding proteins in an ATP-dependent manner without itself being part of a final effector complex. This Leptospira borgpetersenii serovar Hardjo-bovis (strain JB197) protein is DNA mismatch repair protein MutL.